The chain runs to 73 residues: UPF0499 protein NFIA_054990 (73 aa).

The N-terminal stretch at M1–A20 is a signal peptide. 3 cysteine pairs are disulfide-bonded: C46/C60, C50/C63, and C56/C70.

Belongs to the UPF0499 family.

Its subcellular location is the secreted. This Neosartorya fischeri (strain ATCC 1020 / DSM 3700 / CBS 544.65 / FGSC A1164 / JCM 1740 / NRRL 181 / WB 181) (Aspergillus fischerianus) protein is UPF0499 protein NFIA_054990.